We begin with the raw amino-acid sequence, 64 residues long: Large ribosomal subunit protein eL37 (64 aa).

Residues C20, C23, C35, and C38 each contribute to the Zn(2+) site. The C4-type zinc finger occupies 20-38; sequence CRRCGRRSFHVRKKVCAAC.

The protein belongs to the eukaryotic ribosomal protein eL37 family. Requires Zn(2+) as cofactor.

Its function is as follows. Binds to the 23S rRNA. The sequence is that of Large ribosomal subunit protein eL37 from Methanococcus maripaludis (strain C5 / ATCC BAA-1333).